Here is a 137-residue protein sequence, read N- to C-terminus: Large-conductance mechanosensitive channel (137 aa).

The next 2 membrane-spanning stretches (helical) occupy residues 10-30 (FAMR…AAFG) and 76-96 (GVFI…FMAI).

Belongs to the MscL family. Homopentamer.

Its subcellular location is the cell inner membrane. Its function is as follows. Channel that opens in response to stretch forces in the membrane lipid bilayer. May participate in the regulation of osmotic pressure changes within the cell. This is Large-conductance mechanosensitive channel from Enterobacter sp. (strain 638).